The following is a 485-amino-acid chain: 28S rRNA (uridine-N(3))-methyltransferase (485 aa).

R296, G318, and N347 together coordinate S-adenosyl-L-methionine.

Belongs to the class IV-like SAM-binding methyltransferase superfamily.

The protein resides in the nucleus. It catalyses the reaction uridine in 28S rRNA + S-adenosyl-L-methionine = N(3)-methyluridine in 28S rRNA + S-adenosyl-L-homocysteine + H(+). Functionally, S-adenosyl-L-methionine-dependent methyltransferase that specifically methylates the uridine in position 3485 of 28S rRNA. The polypeptide is 28S rRNA (uridine-N(3))-methyltransferase (Drosophila melanogaster (Fruit fly)).